We begin with the raw amino-acid sequence, 202 residues long: Small heat shock protein hspG5 (202 aa).

Residues 31 to 202 (KTIIDIIPPM…YSNTIKININ (172 aa)) enclose the sHSP domain. Residues 96–138 (TSSTTLDSKEDEASIEEFEDDIKPKSKSTVTTTATKENKEDEN) form a disordered region.

Belongs to the small heat shock protein (HSP20) family.

This chain is Small heat shock protein hspG5 (hspG5), found in Dictyostelium discoideum (Social amoeba).